A 320-amino-acid polypeptide reads, in one-letter code: Nucleotide-binding protein Pcryo_0127 (320 aa).

32-39 (GRSGSGKT) serves as a coordination point for ATP. 82-85 (DIRT) serves as a coordination point for GTP.

Belongs to the RapZ-like family.

Its function is as follows. Displays ATPase and GTPase activities. In Psychrobacter cryohalolentis (strain ATCC BAA-1226 / DSM 17306 / VKM B-2378 / K5), this protein is Nucleotide-binding protein Pcryo_0127.